Consider the following 357-residue polypeptide: Heat-inducible transcription repressor HrcA (357 aa).

Belongs to the HrcA family.

Negative regulator of class I heat shock genes (grpE-dnaK-dnaJ and groELS operons). Prevents heat-shock induction of these operons. The polypeptide is Heat-inducible transcription repressor HrcA (Anabaena sp. (strain L31)).